The chain runs to 432 residues: Peptidase B (432 aa).

Positions 196 and 201 each coordinate Mn(2+). Residue Lys-208 is part of the active site. Mn(2+) is bound by residues Asp-219, Asp-278, and Glu-280. Residue Arg-282 is part of the active site.

The protein belongs to the peptidase M17 family. As to quaternary structure, homohexamer. Mn(2+) is required as a cofactor.

The protein resides in the cytoplasm. The catalysed reaction is Release of an N-terminal amino acid, Xaa, from a peptide or arylamide. Xaa is preferably Glu or Asp but may be other amino acids, including Leu, Met, His, Cys and Gln.. Its function is as follows. Probably plays an important role in intracellular peptide degradation. This is Peptidase B from Vibrio parahaemolyticus serotype O3:K6 (strain RIMD 2210633).